Reading from the N-terminus, the 218-residue chain is Thiopurine S-methyltransferase (218 aa).

S-adenosyl-L-methionine-binding residues include Trp-10, Leu-45, Glu-66, and Arg-123.

Belongs to the class I-like SAM-binding methyltransferase superfamily. TPMT family.

It localises to the cytoplasm. The enzyme catalyses S-adenosyl-L-methionine + a thiopurine = S-adenosyl-L-homocysteine + a thiopurine S-methylether.. In Pseudomonas aeruginosa (strain ATCC 15692 / DSM 22644 / CIP 104116 / JCM 14847 / LMG 12228 / 1C / PRS 101 / PAO1), this protein is Thiopurine S-methyltransferase.